We begin with the raw amino-acid sequence, 286 residues long: tRNA (guanine-N(7)-)-methyltransferase (286 aa).

Residues 1 to 21 are disordered; it reads MTNPESTAIDPVAAMGTDHTE. Residues Glu-91, Glu-116, Asn-143, and Asp-165 each contribute to the S-adenosyl-L-methionine site. Asp-165 is an active-site residue. Substrate is bound by residues Lys-169, Asp-201, and 262-265; that span reads TNFE.

The protein belongs to the class I-like SAM-binding methyltransferase superfamily. TrmB family.

The catalysed reaction is guanosine(46) in tRNA + S-adenosyl-L-methionine = N(7)-methylguanosine(46) in tRNA + S-adenosyl-L-homocysteine. It functions in the pathway tRNA modification; N(7)-methylguanine-tRNA biosynthesis. In terms of biological role, catalyzes the formation of N(7)-methylguanine at position 46 (m7G46) in tRNA. This chain is tRNA (guanine-N(7)-)-methyltransferase, found in Bifidobacterium longum (strain NCC 2705).